The sequence spans 182 residues: Ribosome maturation factor RimM (182 aa).

The 81-residue stretch at 102-182 (EEGDYYWKDL…TIEVDWDPGF (81 aa)) folds into the PRC barrel domain.

It belongs to the RimM family. Binds ribosomal protein uS19.

The protein localises to the cytoplasm. In terms of biological role, an accessory protein needed during the final step in the assembly of 30S ribosomal subunit, possibly for assembly of the head region. Essential for efficient processing of 16S rRNA. May be needed both before and after RbfA during the maturation of 16S rRNA. It has affinity for free ribosomal 30S subunits but not for 70S ribosomes. The polypeptide is Ribosome maturation factor RimM (Klebsiella pneumoniae (strain 342)).